We begin with the raw amino-acid sequence, 517 residues long: Crotonobetaine/carnitine--CoA ligase (517 aa).

Belongs to the ATP-dependent AMP-binding enzyme family.

It catalyses the reaction 4-(trimethylamino)butanoate + ATP + CoA = 4-(trimethylamino)butanoyl-CoA + AMP + diphosphate. The catalysed reaction is crotonobetaine + ATP + CoA = crotonobetainyl-CoA + AMP + diphosphate. The enzyme catalyses (R)-carnitine + ATP + CoA = (R)-carnitinyl-CoA + AMP + diphosphate. It functions in the pathway amine and polyamine metabolism; carnitine metabolism. Its function is as follows. Catalyzes the transfer of CoA to carnitine, generating the initial carnitinyl-CoA needed for the CaiB reaction cycle. Also has activity toward crotonobetaine and gamma-butyrobetaine. In Escherichia coli O157:H7, this protein is Crotonobetaine/carnitine--CoA ligase.